A 134-amino-acid polypeptide reads, in one-letter code: Profilin-3 (134 aa).

Cys-13 and Cys-118 are disulfide-bonded. An Involved in PIP2 interaction motif is present at residues 84 to 100; it reads AVIRGKKGSGGITIKKT. A Phosphothreonine modification is found at Thr-114.

The protein belongs to the profilin family. In terms of assembly, occurs in many kinds of cells as a complex with monomeric actin in a 1:1 ratio. Phosphorylated by MAP kinases.

It is found in the cytoplasm. Its subcellular location is the cytoskeleton. Functionally, binds to actin and affects the structure of the cytoskeleton. At high concentrations, profilin prevents the polymerization of actin, whereas it enhances it at low concentrations. This chain is Profilin-3, found in Olea europaea (Common olive).